The following is a 312-amino-acid chain: Glyoxylate/hydroxypyruvate reductase A (312 aa).

Residue arginine 227 is part of the active site. Residue histidine 275 is the Proton donor of the active site.

This sequence belongs to the D-isomer specific 2-hydroxyacid dehydrogenase family. GhrA subfamily.

It localises to the cytoplasm. The catalysed reaction is glycolate + NADP(+) = glyoxylate + NADPH + H(+). It carries out the reaction (R)-glycerate + NAD(+) = 3-hydroxypyruvate + NADH + H(+). It catalyses the reaction (R)-glycerate + NADP(+) = 3-hydroxypyruvate + NADPH + H(+). Functionally, catalyzes the NADPH-dependent reduction of glyoxylate and hydroxypyruvate into glycolate and glycerate, respectively. The sequence is that of Glyoxylate/hydroxypyruvate reductase A from Escherichia coli O81 (strain ED1a).